A 249-amino-acid chain; its full sequence is Segregation and condensation protein A (249 aa).

Belongs to the ScpA family. In terms of assembly, component of a cohesin-like complex composed of ScpA, ScpB and the Smc homodimer, in which ScpA and ScpB bind to the head domain of Smc. The presence of the three proteins is required for the association of the complex with DNA.

It is found in the cytoplasm. Participates in chromosomal partition during cell division. May act via the formation of a condensin-like complex containing Smc and ScpB that pull DNA away from mid-cell into both cell halves. The protein is Segregation and condensation protein A of Clostridium acetobutylicum (strain ATCC 824 / DSM 792 / JCM 1419 / IAM 19013 / LMG 5710 / NBRC 13948 / NRRL B-527 / VKM B-1787 / 2291 / W).